The chain runs to 51 residues: Sec-independent protein translocase protein TatA (51 aa).

The helical transmembrane segment at 1–21 threads the bilayer; that stretch reads MGMSFSHLLIILLIIFVLFGA.

It belongs to the TatA/E family. In terms of assembly, the Tat system comprises two distinct complexes: a TatABC complex, containing multiple copies of TatA, TatB and TatC subunits, and a separate TatA complex, containing only TatA subunits. Substrates initially bind to the TatABC complex, which probably triggers association of the separate TatA complex to form the active translocon.

The protein resides in the cell inner membrane. Functionally, part of the twin-arginine translocation (Tat) system that transports large folded proteins containing a characteristic twin-arginine motif in their signal peptide across membranes. TatA could form the protein-conducting channel of the Tat system. This chain is Sec-independent protein translocase protein TatA, found in Rickettsia bellii (strain RML369-C).